A 198-amino-acid polypeptide reads, in one-letter code: HTH-type transcriptional regulator BetI (198 aa).

An HTH tetR-type domain is found at 8–68 (PLRRRELIDA…ATMRHLLREL (61 aa)). Positions 31-50 (TVAQIAHEAGVSPALAHHYF) form a DNA-binding region, H-T-H motif.

The protein operates within amine and polyamine biosynthesis; betaine biosynthesis via choline pathway [regulation]. Its function is as follows. Repressor involved in the biosynthesis of the osmoprotectant glycine betaine. It represses transcription of the choline transporter BetT and the genes of BetAB involved in the synthesis of glycine betaine. In Brucella suis biovar 1 (strain 1330), this protein is HTH-type transcriptional regulator BetI.